The chain runs to 378 residues: Polygalacturonase (378 aa).

A signal peptide spans 1 to 20 (MILTRSVVLGFLGSASLALA). A disulfide bridge connects residues cysteine 39 and cysteine 57. PbH1 repeat units lie at residues 172–203 (SSGL…DIGD), 204–225 (SDSI…AINS), 226–246 (GTNI…SIGS), 255–276 (VETV…RVKA), and 284–306 (IKGV…TIRQ). The Proton donor role is filled by aspartate 218. An intrachain disulfide couples cysteine 220 to cysteine 236. The active site involves histidine 240. Intrachain disulfides connect cysteine 346–cysteine 352 and cysteine 370–cysteine 378.

It belongs to the glycosyl hydrolase 28 family.

It localises to the secreted. The enzyme catalyses (1,4-alpha-D-galacturonosyl)n+m + H2O = (1,4-alpha-D-galacturonosyl)n + (1,4-alpha-D-galacturonosyl)m.. The sequence is that of Polygalacturonase (PEPG1) from Penicillium expansum (Blue mold rot fungus).